The chain runs to 306 residues: Porphobilinogen deaminase (306 aa).

Residue C239 is modified to S-(dipyrrolylmethanemethyl)cysteine.

This sequence belongs to the HMBS family. As to quaternary structure, monomer. Dipyrromethane is required as a cofactor.

It catalyses the reaction 4 porphobilinogen + H2O = hydroxymethylbilane + 4 NH4(+). Its pathway is porphyrin-containing compound metabolism; protoporphyrin-IX biosynthesis; coproporphyrinogen-III from 5-aminolevulinate: step 2/4. Tetrapolymerization of the monopyrrole PBG into the hydroxymethylbilane pre-uroporphyrinogen in several discrete steps. The chain is Porphobilinogen deaminase from Helicobacter pylori (strain HPAG1).